Reading from the N-terminus, the 654-residue chain is Probable Xaa-Pro aminopeptidase P (654 aa).

The Mn(2+) site is built by Asp451, Asp462, Glu560, and Glu574.

The protein belongs to the peptidase M24B family. It depends on Mn(2+) as a cofactor.

It catalyses the reaction Release of any N-terminal amino acid, including proline, that is linked to proline, even from a dipeptide or tripeptide.. In terms of biological role, catalyzes the removal of a penultimate prolyl residue from the N-termini of peptides. The sequence is that of Probable Xaa-Pro aminopeptidase P (ampp) from Botryotinia fuckeliana (strain B05.10) (Noble rot fungus).